The sequence spans 205 residues: Large ribosomal subunit protein bL25 (205 aa).

Positions 185–205 (PAGAVSEAAEGGEAAGETPAA) are disordered. A compositionally biased stretch (low complexity) spans 186 to 205 (AGAVSEAAEGGEAAGETPAA).

Belongs to the bacterial ribosomal protein bL25 family. CTC subfamily. Part of the 50S ribosomal subunit; part of the 5S rRNA/L5/L18/L25 subcomplex. Contacts the 5S rRNA. Binds to the 5S rRNA independently of L5 and L18.

In terms of biological role, this is one of the proteins that binds to the 5S RNA in the ribosome where it forms part of the central protuberance. The protein is Large ribosomal subunit protein bL25 of Cupriavidus taiwanensis (strain DSM 17343 / BCRC 17206 / CCUG 44338 / CIP 107171 / LMG 19424 / R1) (Ralstonia taiwanensis (strain LMG 19424)).